The sequence spans 396 residues: Alanine racemase (396 aa).

The active-site Proton acceptor; specific for D-alanine is Lys-46. At Lys-46 the chain carries N6-(pyridoxal phosphate)lysine. Arg-145 lines the substrate pocket. Tyr-280 serves as the catalytic Proton acceptor; specific for L-alanine. Residue Met-328 participates in substrate binding.

The protein belongs to the alanine racemase family. Pyridoxal 5'-phosphate serves as cofactor.

The catalysed reaction is L-alanine = D-alanine. It participates in amino-acid biosynthesis; D-alanine biosynthesis; D-alanine from L-alanine: step 1/1. Catalyzes the interconversion of L-alanine and D-alanine. May also act on other amino acids. This chain is Alanine racemase (alr), found in Brucella canis (strain ATCC 23365 / NCTC 10854 / RM-666).